The primary structure comprises 1087 residues: Exportin-7 (1087 aa).

In terms of domain architecture, Importin N-terminal spans 30-96; the sequence is AEKALVEFTN…RNYVLNYLAT (67 aa).

Belongs to the exportin family.

It localises to the cytoplasm. Its subcellular location is the nucleus. In terms of biological role, mediates the nuclear export of proteins (cargos) with broad substrate specificity. The sequence is that of Exportin-7 (XPO7) from Gallus gallus (Chicken).